A 552-amino-acid polypeptide reads, in one-letter code: Urocanate hydratase (552 aa).

Residues 49–50 (GG), Gln-127, 173–175 (GMG), Asp-193, 239–240 (NA), 260–264 (QTSAH), 270–271 (YI), and Tyr-319 each bind NAD(+). Cys-407 is an active-site residue. Gly-489 is a binding site for NAD(+).

Belongs to the urocanase family. It depends on NAD(+) as a cofactor.

Its subcellular location is the cytoplasm. The catalysed reaction is 4-imidazolone-5-propanoate = trans-urocanate + H2O. It participates in amino-acid degradation; L-histidine degradation into L-glutamate; N-formimidoyl-L-glutamate from L-histidine: step 2/3. Catalyzes the conversion of urocanate to 4-imidazolone-5-propionate. The sequence is that of Urocanate hydratase from Bacillus cereus (strain ATCC 10987 / NRS 248).